A 100-amino-acid chain; its full sequence is uncharacterized protein (100 aa).

A helical membrane pass occupies residues 13–32; that stretch reads IWSSLNIICLMVTFLNVQLS.

It is found in the mitochondrion membrane. This is an uncharacterized protein from Schizosaccharomyces pombe (strain 972 / ATCC 24843) (Fission yeast).